We begin with the raw amino-acid sequence, 167 residues long: Outer envelope pore protein 21A, chloroplastic (167 aa).

At 1 to 21 (METSLRYATNSRSLKIHAKEK) the chain is on the cytoplasmic side. A beta stranded membrane pass occupies residues 22 to 31 (FPVNSKTRLQ). Residues 32–55 (LHGELDTGAGVPSYFCAMIRYFFH) are Chloroplast intermembrane-facing. A beta stranded transmembrane segment spans residues 56 to 65 (EASTNLGVGL). Topologically, residues 66–71 (HYDKRE) are cytoplasmic. The chain crosses the membrane as a beta stranded span at residues 72–81 (KLRCLVRGKK). Over 82-87 (KFPVIT) the chain is Chloroplast intermembrane. A beta stranded transmembrane segment spans residues 88 to 97 (DEVVTFNIKG). Topologically, residues 98 to 110 (RCDFDQDLVQRNA) are cytoplasmic. Residues 111–120 (KGAAEFDWNI) form a beta stranded membrane-spanning segment. Residues 121-127 (WKFQKDQ) lie on the Chloroplast intermembrane side of the membrane. Residues 128 to 137 (DLRLRIGYEM) traverse the membrane as a beta stranded segment. Over 138–142 (FEKVP) the chain is Cytoplasmic. A beta stranded transmembrane segment spans residues 143–152 (YMQIRENNWT). Residues 153-158 (FNTNLK) are Chloroplast intermembrane-facing. Residues 159–167 (GKWNVRYDL) traverse the membrane as a beta stranded segment.

Belongs to the plastid outer envelope porin OEP21 (TC 1.B.29) family.

It is found in the plastid. The protein localises to the etioplast membrane. It localises to the chloroplast outer membrane. Its function is as follows. Voltage-dependent rectifying anion channel that facilitates the translocation between chloroplast and cytoplasm of phosphorylated carbohydrates such as triosephosphate, 3-phosphoglycerate and inorganic phosphate (Pi) depending of ATP to triosephosphate ratio in the plastidial intermembrane space; in high triosephosphate/ATP conditions (e.g. photosynthesis), export of triosphosphate from chloroplast (outward rectifying channels), but in high ATP/triosephosphate conditions (e.g. dark phase), import of phosphosolutes (inward rectifying channels). The polypeptide is Outer envelope pore protein 21A, chloroplastic (OEP21A) (Arabidopsis thaliana (Mouse-ear cress)).